Consider the following 262-residue polypeptide: Putative hydro-lyase Mflv_5194 (262 aa).

This sequence belongs to the D-glutamate cyclase family.

The chain is Putative hydro-lyase Mflv_5194 from Mycolicibacterium gilvum (strain PYR-GCK) (Mycobacterium gilvum (strain PYR-GCK)).